Here is a 412-residue protein sequence, read N- to C-terminus: Arginine biosynthesis bifunctional protein ArgJ (412 aa).

Residues threonine 155, lysine 181, threonine 192, glutamate 279, asparagine 407, and serine 412 each contribute to the substrate site. Threonine 192 (nucleophile) is an active-site residue.

It belongs to the ArgJ family. In terms of assembly, heterotetramer of two alpha and two beta chains.

Its subcellular location is the cytoplasm. It catalyses the reaction N(2)-acetyl-L-ornithine + L-glutamate = N-acetyl-L-glutamate + L-ornithine. It carries out the reaction L-glutamate + acetyl-CoA = N-acetyl-L-glutamate + CoA + H(+). It participates in amino-acid biosynthesis; L-arginine biosynthesis; L-ornithine and N-acetyl-L-glutamate from L-glutamate and N(2)-acetyl-L-ornithine (cyclic): step 1/1. It functions in the pathway amino-acid biosynthesis; L-arginine biosynthesis; N(2)-acetyl-L-ornithine from L-glutamate: step 1/4. In terms of biological role, catalyzes two activities which are involved in the cyclic version of arginine biosynthesis: the synthesis of N-acetylglutamate from glutamate and acetyl-CoA as the acetyl donor, and of ornithine by transacetylation between N(2)-acetylornithine and glutamate. This Aromatoleum aromaticum (strain DSM 19018 / LMG 30748 / EbN1) (Azoarcus sp. (strain EbN1)) protein is Arginine biosynthesis bifunctional protein ArgJ.